The chain runs to 256 residues: 1-(5-phosphoribosyl)-5-[(5-phosphoribosylamino)methylideneamino] imidazole-4-carboxamide isomerase (256 aa).

The active-site Proton acceptor is Asp8. Catalysis depends on Asp130, which acts as the Proton donor.

Belongs to the HisA/HisF family.

It is found in the cytoplasm. The catalysed reaction is 1-(5-phospho-beta-D-ribosyl)-5-[(5-phospho-beta-D-ribosylamino)methylideneamino]imidazole-4-carboxamide = 5-[(5-phospho-1-deoxy-D-ribulos-1-ylimino)methylamino]-1-(5-phospho-beta-D-ribosyl)imidazole-4-carboxamide. Its pathway is amino-acid biosynthesis; L-histidine biosynthesis; L-histidine from 5-phospho-alpha-D-ribose 1-diphosphate: step 4/9. The polypeptide is 1-(5-phosphoribosyl)-5-[(5-phosphoribosylamino)methylideneamino] imidazole-4-carboxamide isomerase (Chlorobium phaeobacteroides (strain DSM 266 / SMG 266 / 2430)).